We begin with the raw amino-acid sequence, 277 residues long: Large ribosomal subunit protein uL2 (277 aa).

3 disordered regions span residues 1–20, 27–55, and 207–277; these read MGIR…SVSD, TQPE…RHRG, and KAGR…RNQS. Polar residues predominate over residues 27 to 48; that stretch reads TQPEKSLTTYKHSSQGRNNRGV. 2 stretches are compositionally biased toward basic residues: residues 207–220 and 259–277; these read KAGR…RPHV and TRNR…RNQS.

It belongs to the universal ribosomal protein uL2 family. Part of the 50S ribosomal subunit. Forms a bridge to the 30S subunit in the 70S ribosome.

In terms of biological role, one of the primary rRNA binding proteins. Required for association of the 30S and 50S subunits to form the 70S ribosome, for tRNA binding and peptide bond formation. It has been suggested to have peptidyltransferase activity; this is somewhat controversial. Makes several contacts with the 16S rRNA in the 70S ribosome. This Gloeothece citriformis (strain PCC 7424) (Cyanothece sp. (strain PCC 7424)) protein is Large ribosomal subunit protein uL2.